A 365-amino-acid chain; its full sequence is Protein RecA (365 aa).

Gly-81–Thr-88 provides a ligand contact to ATP.

Belongs to the RecA family.

The protein resides in the cytoplasm. In terms of biological role, can catalyze the hydrolysis of ATP in the presence of single-stranded DNA, the ATP-dependent uptake of single-stranded DNA by duplex DNA, and the ATP-dependent hybridization of homologous single-stranded DNAs. It interacts with LexA causing its activation and leading to its autocatalytic cleavage. This is Protein RecA from Borreliella afzelii (strain PKo) (Borrelia afzelii).